The chain runs to 249 residues: tRNA (guanine-N(1)-)-methyltransferase (249 aa).

S-adenosyl-L-methionine contacts are provided by residues Gly121 and Leu141 to Leu146.

It belongs to the RNA methyltransferase TrmD family. Homodimer.

The protein localises to the cytoplasm. The enzyme catalyses guanosine(37) in tRNA + S-adenosyl-L-methionine = N(1)-methylguanosine(37) in tRNA + S-adenosyl-L-homocysteine + H(+). In terms of biological role, specifically methylates guanosine-37 in various tRNAs. This Cereibacter sphaeroides (strain ATCC 17023 / DSM 158 / JCM 6121 / CCUG 31486 / LMG 2827 / NBRC 12203 / NCIMB 8253 / ATH 2.4.1.) (Rhodobacter sphaeroides) protein is tRNA (guanine-N(1)-)-methyltransferase.